The following is a 231-amino-acid chain: Ribonuclease 3 (231 aa).

The RNase III domain occupies 12–139 (LKAFLQKNNI…LIAAIYLDQG (128 aa)). Glu-52 is a Mg(2+) binding site. Asp-56 is an active-site residue. Asp-125 and Glu-128 together coordinate Mg(2+). The active site involves Glu-128. Residues 165–231 (DPKSELQEYF…AANALSKLKT (67 aa)) form the DRBM domain.

Belongs to the ribonuclease III family. Homodimer. The cofactor is Mg(2+).

It is found in the cytoplasm. The catalysed reaction is Endonucleolytic cleavage to 5'-phosphomonoester.. Its function is as follows. Digests double-stranded RNA. Involved in the processing of primary rRNA transcript to yield the immediate precursors to the large and small rRNAs (23S and 16S). Processes some mRNAs, and tRNAs when they are encoded in the rRNA operon. Processes pre-crRNA and tracrRNA of type II CRISPR loci if present in the organism. The protein is Ribonuclease 3 of Mycoplasmopsis synoviae (strain 53) (Mycoplasma synoviae).